A 37-amino-acid chain; its full sequence is NADH dehydrogenase [ubiquinone] 1 alpha subcomplex subunit 5 (37 aa).

Belongs to the complex I NDUFA5 subunit family. Complex I is composed of about 45 different subunits.

It is found in the mitochondrion inner membrane. Accessory subunit of the mitochondrial membrane respiratory chain NADH dehydrogenase (Complex I), that is believed not to be involved in catalysis. Complex I functions in the transfer of electrons from NADH to the respiratory chain. The immediate electron acceptor for the enzyme is believed to be ubiquinone. The sequence is that of NADH dehydrogenase [ubiquinone] 1 alpha subcomplex subunit 5 from Solanum tuberosum (Potato).